The following is a 192-amino-acid chain: Large ribosomal subunit protein uL3 (192 aa).

This sequence belongs to the universal ribosomal protein uL3 family. As to quaternary structure, part of the 50S ribosomal subunit. Forms a cluster with proteins L14 and L19.

In terms of biological role, one of the primary rRNA binding proteins, it binds directly near the 3'-end of the 23S rRNA, where it nucleates assembly of the 50S subunit. The chain is Large ribosomal subunit protein uL3 (rplC) from Wolinella succinogenes (strain ATCC 29543 / DSM 1740 / CCUG 13145 / JCM 31913 / LMG 7466 / NCTC 11488 / FDC 602W) (Vibrio succinogenes).